A 586-amino-acid polypeptide reads, in one-letter code: 25S rRNA (adenine-N(1))-methyltransferase (586 aa).

Disordered stretches follow at residues glycine 23 to leucine 229 and glycine 536 to aspartate 573. Positions alanine 25 to lysine 41 are enriched in low complexity. Residues leucine 65–lysine 83 are compositionally biased toward basic and acidic residues. The segment covering lysine 99–asparagine 108 has biased composition (polar residues). Residues asparagine 114 to asparagine 123 show a composition bias toward basic residues. Residues glycine 144–glutamate 163 show a composition bias toward acidic residues. Over residues aspartate 164–glutamine 182 the composition is skewed to basic and acidic residues. Over residues glutamine 183–lysine 192 the composition is skewed to low complexity. The span at asparagine 204–aspartate 213 shows a compositional bias: polar residues. A compositionally biased stretch (low complexity) spans proline 217 to leucine 229. Positions valine 539 to lysine 549 are enriched in basic and acidic residues. Over residues asparagine 550–proline 559 the composition is skewed to basic residues.

It belongs to the methyltransferase superfamily. RRP8 family.

The protein localises to the nucleus. The protein resides in the nucleolus. In terms of biological role, S-adenosyl-L-methionine-dependent methyltransferase that specifically methylates the N(1) position of a conserved adenine in helix 25.1 in 25S rRNA. Required both for ribosomal 40S and 60S subunits biogenesis. Required for efficient pre-rRNA cleavage at site A2. The sequence is that of 25S rRNA (adenine-N(1))-methyltransferase (RPR8) from Chaetomium thermophilum (strain DSM 1495 / CBS 144.50 / IMI 039719) (Thermochaetoides thermophila).